A 288-amino-acid polypeptide reads, in one-letter code: MSQISAKDVKNLRDITGAGMMDCKKALDETGGDMQQAIDYLRKKGAALAAKRADRDAREGMVEIKMTADHKAGIILELNCETDFVARGEDFTNFTVALGELALAKCISSPEALMTLTLGEAYGGETVDDAIKTMTGKLGEKISLKRLVYIDAGDGVVESYVHPGAQLGAIIHLATDQPDAVRELARDLAMQVAAAAPIVVDRSFVPADYIAKEAEIYRQQALEQGKKEAFVDKIVLGRLEKYYQDVVLSEQFFIKDSTVKVSDVLNEFRKKHQVKVDVIGFVRCKLGE.

The segment at 82-85 is involved in Mg(2+) ion dislocation from EF-Tu; that stretch reads TDFV.

Belongs to the EF-Ts family.

It is found in the cytoplasm. In terms of biological role, associates with the EF-Tu.GDP complex and induces the exchange of GDP to GTP. It remains bound to the aminoacyl-tRNA.EF-Tu.GTP complex up to the GTP hydrolysis stage on the ribosome. The protein is Elongation factor Ts of Pelodictyon phaeoclathratiforme (strain DSM 5477 / BU-1).